Reading from the N-terminus, the 119-residue chain is Putative membrane protein insertion efficiency factor (119 aa).

The disordered stretch occupies residues 82 to 119 (NALRGEKGGESAADVPSGGSVSEPPGPAAETSPNAQGA).

The protein belongs to the UPF0161 family.

It is found in the cell membrane. In terms of biological role, could be involved in insertion of integral membrane proteins into the membrane. This chain is Putative membrane protein insertion efficiency factor, found in Streptomyces griseus subsp. griseus (strain JCM 4626 / CBS 651.72 / NBRC 13350 / KCC S-0626 / ISP 5235).